The primary structure comprises 63 residues: Sec-independent protein translocase protein TatA (63 aa).

A helical transmembrane segment spans residues 1-21 (MGSFSMWHWLIVLVIVLLLFG). The tract at residues 42-63 (GMTDDDAPDTAKTVDHKADETK) is disordered. Positions 53–63 (KTVDHKADETK) are enriched in basic and acidic residues.

This sequence belongs to the TatA/E family. The Tat system comprises two distinct complexes: a TatABC complex, containing multiple copies of TatA, TatB and TatC subunits, and a separate TatA complex, containing only TatA subunits. Substrates initially bind to the TatABC complex, which probably triggers association of the separate TatA complex to form the active translocon.

It localises to the cell inner membrane. Functionally, part of the twin-arginine translocation (Tat) system that transports large folded proteins containing a characteristic twin-arginine motif in their signal peptide across membranes. TatA could form the protein-conducting channel of the Tat system. The chain is Sec-independent protein translocase protein TatA from Rhizobium etli (strain CIAT 652).